A 151-amino-acid polypeptide reads, in one-letter code: SsrA-binding protein (151 aa).

The protein belongs to the SmpB family.

It is found in the cytoplasm. In terms of biological role, required for rescue of stalled ribosomes mediated by trans-translation. Binds to transfer-messenger RNA (tmRNA), required for stable association of tmRNA with ribosomes. tmRNA and SmpB together mimic tRNA shape, replacing the anticodon stem-loop with SmpB. tmRNA is encoded by the ssrA gene; the 2 termini fold to resemble tRNA(Ala) and it encodes a 'tag peptide', a short internal open reading frame. During trans-translation Ala-aminoacylated tmRNA acts like a tRNA, entering the A-site of stalled ribosomes, displacing the stalled mRNA. The ribosome then switches to translate the ORF on the tmRNA; the nascent peptide is terminated with the 'tag peptide' encoded by the tmRNA and targeted for degradation. The ribosome is freed to recommence translation, which seems to be the essential function of trans-translation. In Campylobacter concisus (strain 13826), this protein is SsrA-binding protein.